The following is a 1023-amino-acid chain: Solute carrier family 12 member 3 (1023 aa).

Residues 1–134 (MELPGDGVHL…EPPPEPPRFG (134 aa)) lie on the Cytoplasmic side of the membrane. Residues 91 to 131 (DPEQDDFKPPMYEETAGERMGGGDSSEEEEEEHKEPPPEPP) are disordered. A discontinuously helical membrane pass occupies residues 135–164 (WVQGVMIRCMLNIWGVILYLRLPWITAQAG). Na(+)-binding residues include Leu145 and Trp148. The helical transmembrane segment at 165 to 186 (IGLTWVIILLSSFITGITGLST) threads the bilayer. Residues 187–217 (SAIATNGKVKGGGTYFLISRSLGPELGGSIG) lie on the Cytoplasmic side of the membrane. The chain crosses the membrane as a helical span at residues 218 to 240 (LIFAFANAVAVAMHTVGFAETVT). Topologically, residues 241 to 252 (DLMRENGVVMVD) are extracellular. Helical transmembrane passes span 253 to 277 (PIND…AGME) and 278 to 300 (WESK…YIVG). At 301–335 (TIIPASPQKQAKGFFSYKAEIFAANFVPGWRGKEG) the chain is on the extracellular side. The chain crosses the membrane as a discontinuously helical span at residues 336–357 (SFFGMFSIFFPSATGILAGANI). Gly350, Ile351, and Leu352 together coordinate chloride. Over 358–368 (SGDLKDPTVAI) the chain is Cytoplasmic. A helical transmembrane segment spans residues 369 to 390 (PRGTLMAIFWTTISYLIISATI). Topologically, residues 391–452 (GACVVRDASG…YQSMSLVSAF (62 aa)) are extracellular. 2 N-linked (GlcNAc...) asparagine glycosylation sites follow: Asn403 and Asn414. Cystine bridges form between Cys415-Cys420 and Cys429-Cys435. A glycan (N-linked (GlcNAc...) asparagine) is linked at Asn432. A helical transmembrane segment spans residues 453–476 (APLISAGIFGATLSSALACLVSAP). Ala463, Ser466, and Ser467 together coordinate Na(+). Over 477-506 (KVFQCLCKDQLYPLIGFFGKGYGKNAEPLR) the chain is Cytoplasmic. Residues 507 to 521 (AYLLTYVIAVCFVLI) traverse the membrane as a helical segment. At 522–526 (AELNT) the chain is on the extracellular side. The helical transmembrane segment at 527–543 (IAPIISNFFLCSYALIN) threads the bilayer. Position 539 (Tyr539) interacts with chloride. Residues 544 to 566 (FSCFHASVTNSPGWRPSFRFYSK) lie on the Cytoplasmic side of the membrane. The next 2 membrane-spanning stretches (helical) occupy residues 567–586 (WLSL…LTWW) and 587–598 (AALIAFGVVFFL). Residues 599 to 1023 (LGYTLYKKPA…QENVLTFYCQ (425 aa)) lie on the Cytoplasmic side of the membrane. The tract at residues 614 to 629 (SVQASSYSMALNQCVG) is scissor helix. The ATP site is built by Leu647, Arg654, Val676, Gly733, and Leu772.

The protein belongs to the SLC12A transporter family. As to quaternary structure, homodimer; adopts a domain-swap conformation at the scissor helices connecting the transmembrane domain and C-terminal domain. Expressed in urinary bladder, intestine, ovary, skeletal muscle, eye, brain, and kidney.

The protein resides in the cell membrane. It catalyses the reaction chloride(out) + Na(+)(out) = chloride(in) + Na(+)(in). With respect to regulation, inhibited by thiazide-type diuretics including polythiazide, metolazone, cyclothiazide, hydrochlorothiazide and chlorthalidone. Thiazide drugs, specifically inhibit SLC12A3/NCC transporter activity by competing with chloride for binding. Its function is as follows. Electroneutral sodium and chloride ion cotransporter, with a coupling ratio 1 Na(+):1 Cl(-). Mediates sodium and chloride reabsorption. The sequence is that of Solute carrier family 12 member 3 (slc12a3) from Pseudopleuronectes americanus (Winter flounder).